Consider the following 489-residue polypeptide: Cysteine--tRNA ligase (489 aa).

Zn(2+) is bound at residue cysteine 27. The 'HIGH' region signature appears at valine 29–histidine 39. Residues cysteine 211, histidine 236, and glutamate 240 each contribute to the Zn(2+) site. Residues lysine 268–serine 272 carry the 'KMSKS' region motif. An ATP-binding site is contributed by lysine 271.

Belongs to the class-I aminoacyl-tRNA synthetase family. Monomer. Zn(2+) serves as cofactor.

The protein localises to the cytoplasm. The enzyme catalyses tRNA(Cys) + L-cysteine + ATP = L-cysteinyl-tRNA(Cys) + AMP + diphosphate. The polypeptide is Cysteine--tRNA ligase (Prochlorococcus marinus (strain AS9601)).